The chain runs to 28 residues: Toxin a (28 aa).

The region spanning 3-28 is the LCN-type CS-alpha/beta domain; that stretch reads VPGNYPLDSYGNCYPCTILGDNQYCI.

This sequence belongs to the long (3 C-C) scorpion toxin superfamily. In terms of tissue distribution, expressed by the venom gland.

It is found in the secreted. Its function is as follows. Binds to sodium channels (Nav) and affects the channel activation process. In Androctonus crassicauda (Arabian fat-tailed scorpion), this protein is Toxin a.